The following is a 359-amino-acid chain: 3-dehydroquinate synthase (359 aa).

Residues 72 to 77 (EGEEHK), 106 to 110 (GVVGD), 130 to 131 (TT), K143, K152, and 170 to 173 (TLTT) contribute to the NAD(+) site. Positions 185, 248, and 265 each coordinate Zn(2+).

It belongs to the sugar phosphate cyclases superfamily. Dehydroquinate synthase family. The cofactor is Co(2+). Requires Zn(2+) as cofactor. NAD(+) serves as cofactor.

The protein resides in the cytoplasm. It catalyses the reaction 7-phospho-2-dehydro-3-deoxy-D-arabino-heptonate = 3-dehydroquinate + phosphate. Its pathway is metabolic intermediate biosynthesis; chorismate biosynthesis; chorismate from D-erythrose 4-phosphate and phosphoenolpyruvate: step 2/7. Its function is as follows. Catalyzes the conversion of 3-deoxy-D-arabino-heptulosonate 7-phosphate (DAHP) to dehydroquinate (DHQ). The protein is 3-dehydroquinate synthase of Pelobacter propionicus (strain DSM 2379 / NBRC 103807 / OttBd1).